The sequence spans 746 residues: Bud site selection protein 7 (746 aa).

The segment at 733–746 is CHS5-binding; it reads LNFFTTCTIGCYDA.

Belongs to the CHAPS family. As to quaternary structure, component of the CHS5/6 complex composed of the 4 CHAPS proteins BCH1, BCH2v, BUD7, and CHS6 as well as at least CHS5 and GTP-bound ARF1. The complex interacts with the cargo protein CHS3.

The protein resides in the golgi apparatus. The protein localises to the trans-Golgi network membrane. Member of the CHS5-ARF1P-binding proteins (CHAPS) which mediates export of specific cargo proteins, including chitin synthase CHS3. May be involved in positioning the proximal bud pole signal. This Saccharomyces cerevisiae (strain ATCC 204508 / S288c) (Baker's yeast) protein is Bud site selection protein 7 (BUD7).